The sequence spans 802 residues: Lon protease (802 aa).

In terms of domain architecture, Lon N-terminal spans Leu21–Ile215. Residue Gly367–Thr374 participates in ATP binding. Residues Glu603–Arg784 enclose the Lon proteolytic domain. Catalysis depends on residues Ser690 and Lys733.

The protein belongs to the peptidase S16 family. In terms of assembly, homohexamer. Organized in a ring with a central cavity.

It localises to the cytoplasm. It carries out the reaction Hydrolysis of proteins in presence of ATP.. ATP-dependent serine protease that mediates the selective degradation of mutant and abnormal proteins as well as certain short-lived regulatory proteins. Required for cellular homeostasis and for survival from DNA damage and developmental changes induced by stress. Degrades polypeptides processively to yield small peptide fragments that are 5 to 10 amino acids long. Binds to DNA in a double-stranded, site-specific manner. The chain is Lon protease from Endomicrobium trichonymphae.